A 326-amino-acid polypeptide reads, in one-letter code: Vitamin B12 import system permease protein BtuC (326 aa).

9 helical membrane passes run 15 to 35 (WLLCLSVLMLLALLLSLCAGE), 61 to 81 (LAVLLVGAALAISGAVMQALF), 88 to 108 (PGLLGVSNGAGVGLIAAVLLG), 112 to 132 (LPNWALGLCAIAGALIITLIL), 146 to 166 (LLAGVALGIICSALMTWAIYF), 184 to 204 (GGVDWRQSWLMLALIPVLLWI), 240 to 260 (GWMVGVSVALAGAIGFIGLVI), 274 to 294 (VLLPGCALAGASALLLADVVA), and 302 to 322 (ELPIGVVTATLGAPVFIWLLL).

Belongs to the binding-protein-dependent transport system permease family. FecCD subfamily. The complex is composed of two ATP-binding proteins (BtuD), two transmembrane proteins (BtuC) and a solute-binding protein (BtuF).

Its subcellular location is the cell inner membrane. Part of the ABC transporter complex BtuCDF involved in vitamin B12 import. Involved in the translocation of the substrate across the membrane. In Escherichia coli (strain SE11), this protein is Vitamin B12 import system permease protein BtuC.